Consider the following 420-residue polypeptide: 3-isopropylmalate dehydratase large subunit (420 aa).

Cysteine 300, cysteine 360, and cysteine 363 together coordinate [4Fe-4S] cluster.

Belongs to the aconitase/IPM isomerase family. LeuC type 2 subfamily. In terms of assembly, heterodimer of LeuC and LeuD. Requires [4Fe-4S] cluster as cofactor.

The catalysed reaction is (2R,3S)-3-isopropylmalate = (2S)-2-isopropylmalate. It participates in amino-acid biosynthesis; L-leucine biosynthesis; L-leucine from 3-methyl-2-oxobutanoate: step 2/4. In terms of biological role, catalyzes the isomerization between 2-isopropylmalate and 3-isopropylmalate, via the formation of 2-isopropylmaleate. The sequence is that of 3-isopropylmalate dehydratase large subunit from Halothermothrix orenii (strain H 168 / OCM 544 / DSM 9562).